We begin with the raw amino-acid sequence, 272 residues long: WIMGHMVNNIKQIDEFVNLGSNAIETDVSFDKKANPEYTYHGTPCDCGRDCLRWEYFNDFVKALRTATTPGNSKYDKLFLVVFDLKTGSLYDYQASEAGTKLAKNLLQHYRNNGNNGGRAYIILSIPNLKHFKLITGFQQTLKGEGHAELLDKVGYDFSGNDDIGDVQKIYEKAGVTGHVWQSDGITNCLLRGFTRINAAVANRDSANGIINKVYYWTVDKRQTTRDTLDANVDGIMTNYPDITVEILNEDAYKTKFRIATYEDNPWETFKE.

Residue histidine 5 is part of the active site. 2 residues coordinate Mg(2+): glutamate 25 and aspartate 27. The active-site Nucleophile is histidine 41. 2 cysteine pairs are disulfide-bonded: cysteine 45–cysteine 51 and cysteine 47–cysteine 189. Mg(2+) is bound at residue aspartate 84.

The protein belongs to the arthropod phospholipase D family. Class II subfamily. Requires Mg(2+) as cofactor. Expressed by the venom gland.

The protein localises to the secreted. It catalyses the reaction an N-(acyl)-sphingosylphosphocholine = an N-(acyl)-sphingosyl-1,3-cyclic phosphate + choline. The enzyme catalyses an N-(acyl)-sphingosylphosphoethanolamine = an N-(acyl)-sphingosyl-1,3-cyclic phosphate + ethanolamine. It carries out the reaction a 1-acyl-sn-glycero-3-phosphocholine = a 1-acyl-sn-glycero-2,3-cyclic phosphate + choline. The catalysed reaction is a 1-acyl-sn-glycero-3-phosphoethanolamine = a 1-acyl-sn-glycero-2,3-cyclic phosphate + ethanolamine. Its function is as follows. Dermonecrotic toxins cleave the phosphodiester linkage between the phosphate and headgroup of certain phospholipids (sphingolipid and lysolipid substrates), forming an alcohol (often choline) and a cyclic phosphate. This toxin acts on sphingomyelin (SM). It may also act on ceramide phosphoethanolamine (CPE), lysophosphatidylcholine (LPC) and lysophosphatidylethanolamine (LPE), but not on lysophosphatidylserine (LPS), and lysophosphatidylglycerol (LPG). It acts by transphosphatidylation, releasing exclusively cyclic phosphate products as second products. Induces dermonecrosis, hemolysis, increased vascular permeability, edema, inflammatory response, and platelet aggregation. The polypeptide is Dermonecrotic toxin LvSicTox-alphaIC1bv (Loxosceles variegata (Recluse spider)).